A 449-amino-acid chain; its full sequence is Sensor protein QseC (449 aa).

At Met1–Arg12 the chain is on the cytoplasmic side. Residues Leu13–Trp33 traverse the membrane as a helical segment. Residues Lys34 to Ala156 lie on the Periplasmic side of the membrane. The helical transmembrane segment at Leu157–Ile177 threads the bilayer. The Cytoplasmic portion of the chain corresponds to Met178–Trp449. The 207-residue stretch at Asp243 to Trp449 folds into the Histidine kinase domain. Phosphohistidine; by autocatalysis is present on His246.

The protein resides in the cell inner membrane. The catalysed reaction is ATP + protein L-histidine = ADP + protein N-phospho-L-histidine.. In terms of biological role, member of a two-component regulatory system QseB/QseC. Activates the flagella regulon by activating transcription of FlhDC. May activate QseB by phosphorylation. This is Sensor protein QseC (qseC) from Escherichia coli (strain K12).